A 107-amino-acid chain; its full sequence is Protein Rev (107 aa).

2 positions are modified to phosphoserine; by host CK2: S5 and S8. Positions 18–26 (IIKILYQSN) are homomultimerization. Disordered regions lie at residues 26 to 48 (NPYP…WRAR) and 81 to 107 (LNLD…VGNP). The short motif at 34–50 (TRQARRNRRRRWRARQR) is the Nuclear localization signal and RNA-binding (RRE) element. Over residues 36–48 (QARRNRRRRWRAR) the composition is skewed to basic residues. A Nuclear export signal and binding to XPO1 motif is present at residues 73–84 (LQLPPLERLNLD). Residues 89–101 (SGTSGTQQSQGTT) show a composition bias toward low complexity. Phosphoserine; by host is present on S92.

This sequence belongs to the HIV-1 REV protein family. As to quaternary structure, homomultimer; when bound to the RRE. Multimeric assembly is essential for activity and may involve XPO1. Binds to human KPNB1, XPO1, TNPO1, RANBP5 and IPO7. Interacts with the viral Integrase. Interacts with human KHDRBS1. Interacts with human NAP1; this interaction decreases Rev multimerization and stimulates its activity. Interacts with human DEAD-box helicases DDX3 and DDX24; these interactions may serve for viral RNA export to the cytoplasm and packaging, respectively. Interacts with human PSIP1; this interaction may inhibit HIV-1 DNA integration by promoting dissociation of the Integrase-LEDGF/p75 complex. Asymmetrically arginine dimethylated at one site by host PRMT6. Methylation impairs the RNA-binding activity and export of viral RNA from the nucleus to the cytoplasm. In terms of processing, phosphorylated by protein kinase CK2. Presence of, and maybe binding to the N-terminus of the regulatory beta subunit of CK2 is necessary for CK2-mediated Rev's phosphorylation.

It is found in the host nucleus. The protein resides in the host nucleolus. The protein localises to the host cytoplasm. Functionally, escorts unspliced or incompletely spliced viral pre-mRNAs (late transcripts) out of the nucleus of infected cells. These pre-mRNAs carry a recognition sequence called Rev responsive element (RRE) located in the env gene, that is not present in fully spliced viral mRNAs (early transcripts). This function is essential since most viral proteins are translated from unspliced or partially spliced pre-mRNAs which cannot exit the nucleus by the pathway used by fully processed cellular mRNAs. Rev itself is translated from a fully spliced mRNA that readily exits the nucleus. Rev's nuclear localization signal (NLS) binds directly to KPNB1/Importin beta-1 without previous binding to KPNA1/Importin alpha-1. KPNB1 binds to the GDP bound form of RAN (Ran-GDP) and targets Rev to the nucleus. In the nucleus, the conversion from Ran-GDP to Ran-GTP dissociates Rev from KPNB1 and allows Rev's binding to the RRE in viral pre-mRNAs. Rev multimerization on the RRE via cooperative assembly exposes its nuclear export signal (NES) to the surface. Rev can then form a complex with XPO1/CRM1 and Ran-GTP, leading to nuclear export of the complex. Conversion from Ran-GTP to Ran-GDP mediates dissociation of the Rev/RRE/XPO1/RAN complex, so that Rev can return to the nucleus for a subsequent round of export. Beside KPNB1, also seems to interact with TNPO1/Transportin-1, RANBP5/IPO5 and IPO7/RANBP7 for nuclear import. The nucleoporin-like HRB/RIP is an essential cofactor that probably indirectly interacts with Rev to release HIV RNAs from the perinuclear region to the cytoplasm. In Homo sapiens (Human), this protein is Protein Rev.